The primary structure comprises 359 residues: Phospho-N-acetylmuramoyl-pentapeptide-transferase (359 aa).

Transmembrane regions (helical) follow at residues 3-23 (QILI…PALI), 55-75 (VAII…GLAF), 80-100 (ISAS…VGFL), 117-137 (TAKT…ALGF), 156-176 (IATV…VVSA), 187-207 (LDGL…LITF), 231-251 (LAIV…WNAA), 255-275 (IFMG…ISVT), 280-300 (ILAV…VLQI), and 334-354 (FWLL…GEWL).

This sequence belongs to the glycosyltransferase 4 family. MraY subfamily. Mg(2+) is required as a cofactor.

The protein resides in the cell membrane. It carries out the reaction UDP-N-acetyl-alpha-D-muramoyl-L-alanyl-gamma-D-glutamyl-meso-2,6-diaminopimeloyl-D-alanyl-D-alanine + di-trans,octa-cis-undecaprenyl phosphate = di-trans,octa-cis-undecaprenyl diphospho-N-acetyl-alpha-D-muramoyl-L-alanyl-D-glutamyl-meso-2,6-diaminopimeloyl-D-alanyl-D-alanine + UMP. It functions in the pathway cell wall biogenesis; peptidoglycan biosynthesis. Functionally, catalyzes the initial step of the lipid cycle reactions in the biosynthesis of the cell wall peptidoglycan: transfers peptidoglycan precursor phospho-MurNAc-pentapeptide from UDP-MurNAc-pentapeptide onto the lipid carrier undecaprenyl phosphate, yielding undecaprenyl-pyrophosphoryl-MurNAc-pentapeptide, known as lipid I. The protein is Phospho-N-acetylmuramoyl-pentapeptide-transferase of Mycolicibacterium paratuberculosis (strain ATCC BAA-968 / K-10) (Mycobacterium paratuberculosis).